The following is a 361-amino-acid chain: D-alanine--D-alanine ligase (361 aa).

Residues 134–344 form the ATP-grasp domain; that stretch reads KLLLKSFNIP…FKDLVDNLIN (211 aa). ATP is bound at residue 167–222; it reads REALGYPVIVKPAVLGSSIGINVAYSENQIEFFIEEALKYDLTILIEKFIEAREIE. D297, E311, and N313 together coordinate Mg(2+).

This sequence belongs to the D-alanine--D-alanine ligase family. Mg(2+) is required as a cofactor. Mn(2+) serves as cofactor.

It localises to the cytoplasm. The enzyme catalyses 2 D-alanine + ATP = D-alanyl-D-alanine + ADP + phosphate + H(+). Its pathway is cell wall biogenesis; peptidoglycan biosynthesis. Functionally, cell wall formation. The chain is D-alanine--D-alanine ligase from Borrelia garinii subsp. bavariensis (strain ATCC BAA-2496 / DSM 23469 / PBi) (Borreliella bavariensis).